A 142-amino-acid polypeptide reads, in one-letter code: Lutropin subunit beta (142 aa).

Positions 1–21 (MEMLQGLLLLWLLLNVGGVWT) are cleaved as a signal peptide. 6 cysteine pairs are disulfide-bonded: Cys30–Cys78, Cys44–Cys93, Cys47–Cys131, Cys55–Cys109, Cys59–Cys111, and Cys114–Cys121. Asn34 carries an N-linked (GlcNAc...) asparagine glycan.

This sequence belongs to the glycoprotein hormones subunit beta family. In terms of assembly, heterodimer of a common alpha chain and a unique beta chain which confers biological specificity to thyrotropin, lutropin, follitropin and gonadotropin.

It localises to the secreted. Its function is as follows. Promotes spermatogenesis and ovulation by stimulating the testes and ovaries to synthesize steroids. The chain is Lutropin subunit beta (LHB) from Panthera tigris altaica (Siberian tiger).